The following is a 452-amino-acid chain: Probable E3 ubiquitin-protein ligase ARI15 (452 aa).

Residues 22–256 (SRVYCGICSN…GTSGSCLAPA (235 aa)) are TRIAD supradomain. Residues Cys26, Cys29, Cys54, His56, Cys59, Cys62, Cys83, Cys88, Cys128, Cys133, Cys154, Cys156, Cys161, Cys164, His169, Cys174, Cys208, Cys211, Cys229, Cys231, Cys236, Cys239, His246, and Cys252 each contribute to the Zn(2+) site. The RING-type 1 zinc-finger motif lies at 26 to 88 (CGICSNIGDD…TAISCPDRDC (63 aa)). An IBR-type zinc finger spans residues 106–174 (AMYELYILKS…MLESHRPVTC (69 aa)). Residues 208–239 (CPHCFIPVEIDGERPWAQFLTCVCSGRFCWKC) form an RING-type 2; atypical zinc finger. The segment at 414–445 (NYGGPYWLCDRCTYGNSWFQRACKMCCDPTAS) adopts a RanBP2-type zinc-finger fold.

This sequence belongs to the RBR family. Ariadne subfamily. The cofactor is Zn(2+). In terms of tissue distribution, ubiquitous.

It catalyses the reaction [E2 ubiquitin-conjugating enzyme]-S-ubiquitinyl-L-cysteine + [acceptor protein]-L-lysine = [E2 ubiquitin-conjugating enzyme]-L-cysteine + [acceptor protein]-N(6)-ubiquitinyl-L-lysine.. It participates in protein modification; protein ubiquitination. In terms of biological role, might act as an E3 ubiquitin-protein ligase, or as part of E3 complex, which accepts ubiquitin from specific E2 ubiquitin-conjugating enzymes and then transfers it to substrates. The polypeptide is Probable E3 ubiquitin-protein ligase ARI15 (ARI15) (Arabidopsis thaliana (Mouse-ear cress)).